Here is a 653-residue protein sequence, read N- to C-terminus: MSAAPLYPVRPEVAATTLTDEATYKAMYQQSVINPDGFWREQAQRIDWIKPFTKVKQTSFDDHHVDIKWFADGTLNVSSNCLDRHLEERGDQLAIIWEGDDPSEHRNITYRELHEQVCKFANALRGQDVHRGDVVTIYMPMIPEAVVAMLACARIGAIHSVVFGGFSPEALAGRIIDCKSKVVITADEGVRGGRRTPLKANVDLALTNPETSSVQKIIVCKRTGGDIAWHQHRDIWYEDLMKVASSHCAPKEMGAEEALFILYTSGSTGKPKGVLHTTGGYLVYAALTHERVFDYRPGEVYWCTADVGWVTGHSYIVYGPLANGATTLLFEGVPNYPDITRVSKIVDKHKVNILYTAPTAIRAMMAEGQAAVEGADGSSLRLLGSVGEPINPEAWNWYYKTVGKERCPIVDTWWQTETGGILISPLPGATGLKPGSATRPFFGVVPALVDNLGNLIDGAAEGNLVILDSWPGQSRSLYGDHDRFVDTYFKTFRGMYFTGDGARRDEDGYYWITGRVDDVLNVSGHRMGTAEIESAMVAHSKVAEAAVVGVPHDIKGQGIYVYVTLNAGIEASEQLRLELKNWVRKEIGPIASPDVIQWAPGLPKTRSGKIMRRILRKIATGEYDALGDISTLADPGVVQHLIDTHKAMNLASA.

CoA-binding positions include 191 to 194 (RGGR), Thr311, and Asn335. ATP contacts are provided by residues 387–389 (GEP), 411–416 (DTWWQT), Asp500, and Arg515. Position 523 (Ser523) interacts with CoA. An ATP-binding site is contributed by Arg526. Residues Val537, His539, and Val542 each coordinate Mg(2+). Residue Arg584 participates in CoA binding. Lys609 is subject to N6-acetyllysine.

Belongs to the ATP-dependent AMP-binding enzyme family. The cofactor is Mg(2+). Post-translationally, acetylated. Deacetylation by the SIR2-homolog deacetylase activates the enzyme.

It carries out the reaction acetate + ATP + CoA = acetyl-CoA + AMP + diphosphate. Its function is as follows. Catalyzes the conversion of acetate into acetyl-CoA (AcCoA), an essential intermediate at the junction of anabolic and catabolic pathways. AcsA undergoes a two-step reaction. In the first half reaction, AcsA combines acetate with ATP to form acetyl-adenylate (AcAMP) intermediate. In the second half reaction, it can then transfer the acetyl group from AcAMP to the sulfhydryl group of CoA, forming the product AcCoA. The chain is Acetyl-coenzyme A synthetase 1 from Pseudomonas putida (strain ATCC 47054 / DSM 6125 / CFBP 8728 / NCIMB 11950 / KT2440).